The following is a 212-amino-acid chain: Cytidylate kinase (212 aa).

7-15 (GPAASGKGT) contacts ATP.

This sequence belongs to the cytidylate kinase family. Type 1 subfamily.

Its subcellular location is the cytoplasm. The enzyme catalyses CMP + ATP = CDP + ADP. The catalysed reaction is dCMP + ATP = dCDP + ADP. The sequence is that of Cytidylate kinase from Nitrobacter winogradskyi (strain ATCC 25391 / DSM 10237 / CIP 104748 / NCIMB 11846 / Nb-255).